The following is a 519-amino-acid chain: MIOREX complex component 12 (519 aa).

A mitochondrion-targeting transit peptide spans 1-35 (MLRSLHSAATLSNKRFYSLISHSNRKNIIKKLLRH).

As to quaternary structure, associates with the mitochondrial ribosome.

The protein localises to the mitochondrion. Functionally, component of MIOREX complexes, large expressome-like assemblies of ribosomes with factors involved in all the steps of post-transcriptional gene expression. In Saccharomyces cerevisiae (strain ATCC 204508 / S288c) (Baker's yeast), this protein is MIOREX complex component 12.